The chain runs to 73 residues: RNA-binding protein Hfq (73 aa).

One can recognise a Sm domain in the interval 8-68 (DQFLNQIRKD…ISTFAPQKNV (61 aa)).

Belongs to the Hfq family. In terms of assembly, homohexamer.

Its function is as follows. RNA chaperone that binds small regulatory RNA (sRNAs) and mRNAs to facilitate mRNA translational regulation in response to envelope stress, environmental stress and changes in metabolite concentrations. Also binds with high specificity to tRNAs. This Bacillus pumilus (strain SAFR-032) protein is RNA-binding protein Hfq.